A 565-amino-acid chain; its full sequence is Molybdenum cofactor biosynthesis protein 1 (565 aa).

The tract at residues 3–367 is molybdenum cofactor biosynthesis protein A; it reads LLARHAIRLL…AVQRKKKQHA (365 aa). Positions 64-276 constitute a Radical SAM core domain; sequence SFGRHHTYLR…LQIIRQRWPD (213 aa). Arginine 73 is a binding site for GTP. [4Fe-4S] cluster contacts are provided by cysteine 80 and cysteine 84. Tyrosine 86 is a binding site for S-adenosyl-L-methionine. Residue cysteine 87 coordinates [4Fe-4S] cluster. Arginine 123 provides a ligand contact to GTP. Glycine 127 lines the S-adenosyl-L-methionine pocket. Residue threonine 154 participates in GTP binding. Serine 178 contacts S-adenosyl-L-methionine. Lysine 214 lines the GTP pocket. Methionine 248 serves as a coordination point for S-adenosyl-L-methionine. Cysteine 311 and cysteine 314 together coordinate [4Fe-4S] cluster. 316–318 is a binding site for GTP; that stretch reads RLR. Cysteine 328 contacts [4Fe-4S] cluster. Aspartate 525 acts as the For molybdenum cofactor biosynthesis protein C activity in catalysis.

This sequence in the C-terminal section; belongs to the MoaC family. The protein in the N-terminal section; belongs to the radical SAM superfamily. MoaA family. In terms of assembly, isoform Mocs1a and isoform Mocs1b probably form a heterooligomer. Requires [4Fe-4S] cluster as cofactor.

The catalysed reaction is GTP + AH2 + S-adenosyl-L-methionine = (8S)-3',8-cyclo-7,8-dihydroguanosine 5'-triphosphate + 5'-deoxyadenosine + L-methionine + A + H(+). The enzyme catalyses (8S)-3',8-cyclo-7,8-dihydroguanosine 5'-triphosphate = cyclic pyranopterin phosphate + diphosphate. Its pathway is cofactor biosynthesis; molybdopterin biosynthesis. In terms of biological role, isoform Mocs1a and isoform Mocs1b probably form a complex that catalyzes the conversion of 5'-GTP to cyclic pyranopterin monophosphate (cPMP). Mocs1a catalyzes the cyclization of GTP to (8S)-3',8-cyclo-7,8-dihydroguanosine 5'-triphosphate and Mocs1b catalyzes the subsequent conversion of (8S)-3',8-cyclo-7,8-dihydroguanosine 5'-triphosphate to cPMP. This is Molybdenum cofactor biosynthesis protein 1 (Mocs1) from Drosophila melanogaster (Fruit fly).